The following is a 491-amino-acid chain: Chondroitin proteoglycan 2 (491 aa).

The first 18 residues, 1-18 (MKTIVALGLLALATAASG), serve as a signal peptide directing secretion. Residues 21–78 (LQDCTNALDGLYAIGNCESQFLTCSGGIARIMDCPADLIYNEPLLICDWRHNVVGCEG) enclose the Chitin-binding type-2 1 domain. Residues Cys54 and Cys67 are joined by a disulfide bond. The segment at 80-126 (GEASGEQSGEGSGEASGEGSGEASGEGSGEASGEGSGSGEGSGEENN) is disordered. The segment covering 87 to 120 (SGEGSGEASGEGSGEASGEGSGEASGEGSGSGEG) has biased composition (gly residues). The region spanning 125 to 182 (NNVCEGLEDGAYSSGGCTTYYFFCTDNTARFLSCPTPLFYDVATQKCAWKALVEECNG) is the Chitin-binding type-2 2 domain. Cys158 and Cys171 are oxidised to a cystine. Positions 187–217 (DGSGETSGEGSGEASGENSGENSGEGSGEFE) are disordered. 2 O-linked (Xyl...) (chondroitin sulfate) serine glycosylation sites follow: Ser197 and Ser201. Residues 200–210 (ASGENSGENSG) are compositionally biased toward low complexity. Chitin-binding type-2 domains lie at 217–274 (EPTC…ECHG), 279–334 (APVC…ECQE), 367–423 (ENEC…KCLI), and 436–491 (PFDC…LQCH). 2 disulfides stabilise this stretch: Cys250-Cys263 and Cys310-Cys323. Residues 336–367 (SGEESSGEASGEQSGEGSGEASGEASGEASGE) form a disordered region. Low complexity predominate over residues 356–367 (ASGEASGEASGE). A disulfide bridge connects residues Cys399 and Cys412. Asn464 carries an N-linked (GlcNAc...) asparagine glycan. A disulfide bond links Cys467 and Cys481.

Its function is as follows. Required for polar body extrusion during cytokinesis in embryo development. Affects cortical granule size. Shown to have roles in meiotic chromosome segregation, osmotic barrier function and polarization in conjunction with cpg-2. Binds chitin. This Caenorhabditis briggsae protein is Chondroitin proteoglycan 2.